The primary structure comprises 227 residues: RNA-free ribonuclease P (227 aa).

It belongs to the HARP family.

It carries out the reaction Endonucleolytic cleavage of RNA, removing 5'-extranucleotides from tRNA precursor.. Functionally, RNA-free RNase P that catalyzes the removal of the 5'-leader sequence from pre-tRNA to produce the mature 5'-terminus. This Archaeoglobus fulgidus (strain ATCC 49558 / DSM 4304 / JCM 9628 / NBRC 100126 / VC-16) protein is RNA-free ribonuclease P.